The chain runs to 171 residues: Protein phosphatase 1 regulatory subunit 1A (171 aa).

Residue methionine 1 is modified to N-acetylmethionine. The interval 9 to 12 (KIQF) is essential for activity. Positions 17–171 (LEPHLDPEAA…PLDSQGASLV (155 aa)) are disordered. Residues 19 to 29 (PHLDPEAAEQI) are compositionally biased toward basic and acidic residues. Threonine 35 is subject to Phosphothreonine; by PKA. The segment at 42 to 54 (TSDQSSPEVDEDR) is essential for activity. 4 positions are modified to phosphoserine: serine 43, serine 46, serine 47, and serine 67. Residues 122 to 133 (GSASRPDTSGTA) are compositionally biased toward polar residues. Basic and acidic residues predominate over residues 137–148 (AESKPKTQEQRG). The segment at 143-171 (TQEQRGVEPSTEDLSAHMLPLDSQGASLV) is interaction with PPP1R15A.

It belongs to the protein phosphatase inhibitor 1 family. As to quaternary structure, interacts with PPP1R15A. In terms of processing, phosphorylation of Thr-35 is required for activity.

Inhibitor of protein-phosphatase 1. This protein may be important in hormonal control of glycogen metabolism. Hormones that elevate intracellular cAMP increase I-1 activity in many tissues. I-1 activation may impose cAMP control over proteins that are not directly phosphorylated by PKA. Following a rise in intracellular calcium, I-1 is inactivated by calcineurin (or PP2B). Does not inhibit type-2 phosphatases. The sequence is that of Protein phosphatase 1 regulatory subunit 1A (Ppp1r1a) from Rattus norvegicus (Rat).